A 591-amino-acid polypeptide reads, in one-letter code: Inactive metallocarboxypeptidase ECM14 (591 aa).

The signal sequence occupies residues 1–21 (MRLFARLEVLAILACAVPIAA). The propeptide occupies 22-175 (IPSFLSNSYP…QTIYESYPSS (154 aa)). The Peptidase M14 domain maps to 203–523 (DYQPFSVIVT…NAVMVLGRFL (321 aa)). Positions 265 and 268 each coordinate Zn(2+). Substrate-binding positions include 265 to 268 (HARE), arginine 323, and 340 to 341 (DR). A disulfide bridge links cysteine 334 with cysteine 357. N-linked (GlcNAc...) asparagine glycans are attached at residues asparagine 350 and asparagine 381. Residue histidine 397 coordinates Zn(2+). 398–399 (SY) provides a ligand contact to substrate. The segment covering 533-543 (DWEDESQRPKA) has biased composition (basic and acidic residues). The segment at 533–591 (DWEDESQRPKADEDDIPSENELGENDDSWIPFDYRNHDDQNEGEGYDNDEWGFRRRRKG) is disordered. Acidic residues-rich tracts occupy residues 544–559 (DEDDIPSENELGENDD) and 573–582 (NEGEGYDNDE).

It belongs to the peptidase M14 family. Requires Zn(2+) as cofactor.

The protein localises to the vacuole. The protein resides in the secreted. Functionally, inactive carboxypeptidase that may play a role in cell wall organization and biogenesis. The chain is Inactive metallocarboxypeptidase ECM14 (ECM14) from Paracoccidioides lutzii (strain ATCC MYA-826 / Pb01) (Paracoccidioides brasiliensis).